A 156-amino-acid polypeptide reads, in one-letter code: SsrA-binding protein (156 aa).

This sequence belongs to the SmpB family.

It localises to the cytoplasm. Its function is as follows. Required for rescue of stalled ribosomes mediated by trans-translation. Binds to transfer-messenger RNA (tmRNA), required for stable association of tmRNA with ribosomes. tmRNA and SmpB together mimic tRNA shape, replacing the anticodon stem-loop with SmpB. tmRNA is encoded by the ssrA gene; the 2 termini fold to resemble tRNA(Ala) and it encodes a 'tag peptide', a short internal open reading frame. During trans-translation Ala-aminoacylated tmRNA acts like a tRNA, entering the A-site of stalled ribosomes, displacing the stalled mRNA. The ribosome then switches to translate the ORF on the tmRNA; the nascent peptide is terminated with the 'tag peptide' encoded by the tmRNA and targeted for degradation. The ribosome is freed to recommence translation, which seems to be the essential function of trans-translation. In Maricaulis maris (strain MCS10) (Caulobacter maris), this protein is SsrA-binding protein.